We begin with the raw amino-acid sequence, 328 residues long: Ferredoxin--NADP reductase 1 (328 aa).

5 residues coordinate FAD: Glu-37, Lys-45, Tyr-49, Val-89, and Thr-310.

This sequence belongs to the ferredoxin--NADP reductase type 2 family. Homodimer. It depends on FAD as a cofactor.

The enzyme catalyses 2 reduced [2Fe-2S]-[ferredoxin] + NADP(+) + H(+) = 2 oxidized [2Fe-2S]-[ferredoxin] + NADPH. The sequence is that of Ferredoxin--NADP reductase 1 from Latilactobacillus sakei subsp. sakei (strain 23K) (Lactobacillus sakei subsp. sakei).